A 21-amino-acid chain; its full sequence is Nigrocin-2GRb (21 aa).

As to expression, expressed by the skin glands.

It is found in the secreted. Functionally, antimicrobial peptide active against the Gram-positive bacterium S.aureus (MIC=12.5 uM) and against the Gram-negative bacteria E.coli (MIC=3 uM). Has antifungal activity against C.albicans (MIC=50 uM). Has some hemolytic activity against human erythrocytes (LC(50)=40 uM). In Odorrana grahami (Yunnanfu frog), this protein is Nigrocin-2GRb.